Reading from the N-terminus, the 185-residue chain is Elongation factor P (185 aa).

This sequence belongs to the elongation factor P family.

Its subcellular location is the cytoplasm. It functions in the pathway protein biosynthesis; polypeptide chain elongation. Involved in peptide bond synthesis. Stimulates efficient translation and peptide-bond synthesis on native or reconstituted 70S ribosomes in vitro. Probably functions indirectly by altering the affinity of the ribosome for aminoacyl-tRNA, thus increasing their reactivity as acceptors for peptidyl transferase. The protein is Elongation factor P of Nostoc punctiforme (strain ATCC 29133 / PCC 73102).